We begin with the raw amino-acid sequence, 131 residues long: Small ribosomal subunit protein uS8 (131 aa).

The protein belongs to the universal ribosomal protein uS8 family. As to quaternary structure, part of the 30S ribosomal subunit. Contacts proteins S5 and S12.

In terms of biological role, one of the primary rRNA binding proteins, it binds directly to 16S rRNA central domain where it helps coordinate assembly of the platform of the 30S subunit. This chain is Small ribosomal subunit protein uS8, found in Chlorobaculum tepidum (strain ATCC 49652 / DSM 12025 / NBRC 103806 / TLS) (Chlorobium tepidum).